Reading from the N-terminus, the 90-residue chain is Small ribosomal subunit protein bS20 (90 aa).

It belongs to the bacterial ribosomal protein bS20 family.

In terms of biological role, binds directly to 16S ribosomal RNA. This chain is Small ribosomal subunit protein bS20, found in Francisella tularensis subsp. holarctica (strain FTNF002-00 / FTA).